Reading from the N-terminus, the 288-residue chain is Acetylglutamate kinase (288 aa).

Residues 66-67 (GG), Arg88, and Asn182 each bind substrate.

The protein belongs to the acetylglutamate kinase family. ArgB subfamily.

It localises to the cytoplasm. The catalysed reaction is N-acetyl-L-glutamate + ATP = N-acetyl-L-glutamyl 5-phosphate + ADP. Its pathway is amino-acid biosynthesis; L-arginine biosynthesis; N(2)-acetyl-L-ornithine from L-glutamate: step 2/4. Its function is as follows. Catalyzes the ATP-dependent phosphorylation of N-acetyl-L-glutamate. The polypeptide is Acetylglutamate kinase (Brachyspira hyodysenteriae (strain ATCC 49526 / WA1)).